The sequence spans 272 residues: MNNRVHQGHFARKRFGQNFLNDHFVIDSIVSAIHPQPGQAVVEIGPGLGALTAPIGERMDRFTVIELDRDLAARLEKHPTLKDKLTIIQQDAMTIDFAALAEQAGQPLRVFGNLPYNISTPLMFHLFTYTQSIRDMHFMLQKEVVNRLVAGPNSKTFGRLSVMAQYYCQIIPVLEVPPEAFKPAPKVDSAVVRLVPHAELPYPVSDIRMLSRITTEAFNQRRKTLRNSLGNLFTPETLTELGINITSRAENVTVEQYCRLANWLSEHPAKQE.

S-adenosyl-L-methionine is bound by residues N18, L20, G45, E66, D91, and N113.

The protein belongs to the class I-like SAM-binding methyltransferase superfamily. rRNA adenine N(6)-methyltransferase family. RsmA subfamily.

The protein resides in the cytoplasm. The enzyme catalyses adenosine(1518)/adenosine(1519) in 16S rRNA + 4 S-adenosyl-L-methionine = N(6)-dimethyladenosine(1518)/N(6)-dimethyladenosine(1519) in 16S rRNA + 4 S-adenosyl-L-homocysteine + 4 H(+). Specifically dimethylates two adjacent adenosines (A1518 and A1519) in the loop of a conserved hairpin near the 3'-end of 16S rRNA in the 30S particle. May play a critical role in biogenesis of 30S subunits. This chain is Ribosomal RNA small subunit methyltransferase A, found in Pectobacterium atrosepticum (strain SCRI 1043 / ATCC BAA-672) (Erwinia carotovora subsp. atroseptica).